The following is a 215-amino-acid chain: 3-demethoxyubiquinol 3-hydroxylase (215 aa).

Positions 64, 94, 97, 146, 178, and 181 each coordinate Fe cation.

It belongs to the COQ7 family. Fe cation serves as cofactor.

The protein localises to the cell membrane. The enzyme catalyses a 5-methoxy-2-methyl-3-(all-trans-polyprenyl)benzene-1,4-diol + AH2 + O2 = a 3-demethylubiquinol + A + H2O. It functions in the pathway cofactor biosynthesis; ubiquinone biosynthesis. Functionally, catalyzes the hydroxylation of 2-nonaprenyl-3-methyl-6-methoxy-1,4-benzoquinol during ubiquinone biosynthesis. The protein is 3-demethoxyubiquinol 3-hydroxylase of Pseudomonas paraeruginosa (strain DSM 24068 / PA7) (Pseudomonas aeruginosa (strain PA7)).